The primary structure comprises 441 residues: Actin-related protein 4 (441 aa).

The disordered stretch occupies residues 48–73 (VDVDSTKTNSNSEDSKTESEKEKSKR). Over residues 60–70 (EDSKTESEKEK) the composition is skewed to basic and acidic residues.

It belongs to the actin family. ARP4 subfamily. Component of the SWR1 chromatin-remodeling complex and of the NuA4 histone acetyltransferase complex. Interacts with the SWI/SNF complex. Interacts with EAF1A and EAF1B. As to expression, mostly expressed in flowers, and, to a lower extent, in roots, seedlings, leaves and siliques (at protein level).

It localises to the nucleus. The protein resides in the cytoplasm. In terms of biological role, involved in several developmental processes including organization of plant organs, flowering time, anther development, flower senescence and fertility, probably by regulating the chromatin structure. This chain is Actin-related protein 4, found in Arabidopsis thaliana (Mouse-ear cress).